The sequence spans 89 residues: uncharacterized protein (89 aa).

It to M.tuberculosis Rv3402c.

This is an uncharacterized protein from Mycobacterium tuberculosis (strain CDC 1551 / Oshkosh).